Consider the following 556-residue polypeptide: Probable Xaa-Pro aminopeptidase SS1G_06948 (556 aa).

The Mn(2+) site is built by Asp-305, Asp-316, Glu-460, and Glu-501.

This sequence belongs to the peptidase M24B family. Mn(2+) is required as a cofactor.

It catalyses the reaction Release of any N-terminal amino acid, including proline, that is linked to proline, even from a dipeptide or tripeptide.. Catalyzes the removal of a penultimate prolyl residue from the N-termini of peptides. This Sclerotinia sclerotiorum (strain ATCC 18683 / 1980 / Ss-1) (White mold) protein is Probable Xaa-Pro aminopeptidase SS1G_06948.